The chain runs to 325 residues: RNA ligase 1 (325 aa).

The cofactor is Mg(2+). Mn(2+) serves as cofactor. AMPylates itself (auto-AMPylation).

It carries out the reaction ATP + (ribonucleotide)n-3'-hydroxyl + 5'-phospho-(ribonucleotide)m = (ribonucleotide)n+m + AMP + diphosphate.. Functions as an RNA ligase, in vitro. The ligation reaction entails three nucleotidyl transfer steps. In the first step, the RNA ligase reacts with ATP in the absence of nucleic acid to form a covalent ligase-AMP intermediate and release pyrophosphate. In step 2, the ligase-AMP binds to the nucleic acid and transfers the adenylate to the 5'-PO4 terminus to form an adenylylated intermediate. In step 3, the RNA ligase directs the attack of the 3'-OH on the 5'-phosphoanhydride linkage, resulting in a repaired 3'-5' phosphodiester and release of AMP. Exhibits selectivity for single-stranded RNA substrates and may not have nick-sealing activity on double-stranded DNA-RNA hybrids. May play a role in maintaining RNA integrity under stress conditions, for example in response to reactive oxygen species (ROS). This chain is RNA ligase 1, found in Pongo abelii (Sumatran orangutan).